The sequence spans 523 residues: MMLRGNLKQVRIEKNPARLRALESAAGESEPVAAAAMALTLAGEQAPPPAPSEEHPDEELGFTIDIKSFLKPGEKTYTQRCRLFVGNLPTDITEEDFKRLFERYGEPSEVFINRDRGFGFIRLESRTLAEIAKAELDGTILKSRPLRIRFATHGAALTVKNLSPVVSNELLEQAFSQFGPVEKAVVVVDDRGRATGKGFVEFAAKPPARKALERCGDGAFLLTTTPRPVIVEPMEQFDDEDGLPEKLMQKTQQYHKEREQPPRFAQPGTFEFEYASRWKALDEMEKQQREQVDRNIREAKEKLEAEMEAARHEHQLMLMRQDLMRRQEELRRLEELRNQELQKRKQIQLRHEEEHRRREEEMIRHREQEELRRQQEGGFKPNYMENREQEMRMGDMGPRGAINMGDAFSPAPAGTQGPPPMMGMNMNNRGTIPGPPMGPGPAMGPEGAANMGTPMIPDNGAVHNDRFPQGPPSQMGSPMGNRTGSETPQAPMSGVGPVSGGPGGFGRGSQGGNFEGPNKRRRY.

M1 bears the N-acetylmethionine mark. RRM domains lie at C81 to H153 and A155 to Q236. The sufficient for paraspeckles localization stretch occupies residues E124–R357. Positions I230 to R357 are sufficient for perinucleolar caps localization and interaction with NONO. Residues D282–E376 are a coiled coil. Phosphoserine occurs at positions 409, 473, and 477. Positions G460 to Y523 are disordered. The segment covering P472–A490 has biased composition (polar residues). The span at P497–F514 shows a compositional bias: gly residues. Position 507 is an omega-N-methylarginine (R507). The residue at position 509 (S509) is a Phosphoserine.

The protein belongs to the PSPC family. Forms heterodimers with NONO; this involves formation of a coiled coil domain by helices from both proteins. Found in a RNP complex with CAT2 transcribed nuclear RNA (CTN-RNA). Interaction with NONO is required for its targeting to paraspeckles and perinucleolar caps. Interacts with SFPQ. Part of the HDP-RNP complex composed of at least HEXIM1, PRKDC, XRCC5, XRCC6, paraspeckle proteins (SFPQ, NONO, PSPC1, RBM14, and MATR3) and NEAT1 RNA. Interacts with ALKBH5 (when acetylated); interaction with acetylated ALKBH5 facilitates recognition of N(6)-methyladenosine (m6A) RNAs. As to expression, isoform 1 is strongly expressed in testis (leptoten spermatocytes, round spematids and Sertoli cells) and moderately in cerebrum, cerebellum, lung, spleen and ovary (at protein level). Isoform 2 is strongly expressed in kidney and moderately in salivary gland (at protein level).

It localises to the nucleus speckle. It is found in the nucleus. Its subcellular location is the nucleolus. The protein localises to the nucleus matrix. The protein resides in the cytoplasm. Its function is as follows. RNA-binding protein required for the formation of nuclear paraspeckles. Binds to poly(A), poly(G) and poly(U) RNA homopolymers. Regulates, cooperatively with NONO and SFPQ, androgen receptor-mediated gene transcription activity in Sertoli cell line. Regulates the circadian clock by repressing the transcriptional activator activity of the CLOCK-BMAL1 heterodimer. Plays a role in the regulation of DNA virus-mediated innate immune response by assembling into the HDP-RNP complex, a complex that serves as a platform for IRF3 phosphorylation and subsequent innate immune response activation through the cGAS-STING pathway. In Mus musculus (Mouse), this protein is Paraspeckle component 1 (Pspc1).